Consider the following 334-residue polypeptide: Transaldolase (334 aa).

Position 2 is an N-acetylserine (serine 2). Lysine 143 functions as the Schiff-base intermediate with substrate in the catalytic mechanism.

Belongs to the transaldolase family. Type 1 subfamily. Homodimer.

It carries out the reaction D-sedoheptulose 7-phosphate + D-glyceraldehyde 3-phosphate = D-erythrose 4-phosphate + beta-D-fructose 6-phosphate. The protein operates within carbohydrate degradation; pentose phosphate pathway; D-glyceraldehyde 3-phosphate and beta-D-fructose 6-phosphate from D-ribose 5-phosphate and D-xylulose 5-phosphate (non-oxidative stage): step 2/3. Its function is as follows. Transaldolase is important for the balance of metabolites in the pentose-phosphate pathway. The protein is Transaldolase (TAL1) of Kluyveromyces lactis (strain ATCC 8585 / CBS 2359 / DSM 70799 / NBRC 1267 / NRRL Y-1140 / WM37) (Yeast).